A 596-amino-acid chain; its full sequence is Elongation factor 4 (596 aa).

Residues 2 to 184 (KHIRNFSIIA…VIVAQIPPPE (183 aa)) enclose the tr-type G domain. Residues 14 to 19 (DHGKST) and 131 to 134 (NKID) contribute to the GTP site.

It belongs to the TRAFAC class translation factor GTPase superfamily. Classic translation factor GTPase family. LepA subfamily.

It localises to the cell inner membrane. The enzyme catalyses GTP + H2O = GDP + phosphate + H(+). In terms of biological role, required for accurate and efficient protein synthesis under certain stress conditions. May act as a fidelity factor of the translation reaction, by catalyzing a one-codon backward translocation of tRNAs on improperly translocated ribosomes. Back-translocation proceeds from a post-translocation (POST) complex to a pre-translocation (PRE) complex, thus giving elongation factor G a second chance to translocate the tRNAs correctly. Binds to ribosomes in a GTP-dependent manner. The protein is Elongation factor 4 of Shewanella woodyi (strain ATCC 51908 / MS32).